Consider the following 566-residue polypeptide: Mediator of RNA polymerase II transcription subunit 1 (566 aa).

At serine 155 the chain carries Phosphoserine. The tract at residues 361–425 (TPSSNSNSSE…TNKSKRPSIT (65 aa)) is disordered. Basic residues predominate over residues 410 to 421 (RRRRSSTNKSKR). Serine 423 carries the post-translational modification Phosphoserine.

The protein belongs to the Mediator complex subunit 1 family. As to quaternary structure, component of the Mediator complex, which is composed of at least 21 subunits that form three structurally distinct submodules. The Mediator head module contains MED6, MED8, MED11, SRB4/MED17, SRB5/MED18, ROX3/MED19, SRB2/MED20 and SRB6/MED22, the middle module contains MED1, MED4, NUT1/MED5, MED7, CSE2/MED9, NUT2/MED10, SRB7/MED21 and SOH1/MED31, and the tail module contains MED2, PGD1/MED3, RGR1/MED14, GAL11/MED15 and SIN4/MED16. The head and the middle modules interact directly with RNA polymerase II, whereas the elongated tail module interacts with gene-specific regulatory proteins. MED1 interacts directly with MED4 and MED7.

The protein localises to the nucleus. In terms of biological role, component of the Mediator complex, a coactivator involved in the regulated transcription of nearly all RNA polymerase II-dependent genes. Mediator functions as a bridge to convey information from gene-specific regulatory proteins to the basal RNA polymerase II transcription machinery. The Mediator complex, having a compact conformation in its free form, is recruited to promoters by direct interactions with regulatory proteins and serves for the assembly of a functional preinitiation complex with RNA polymerase II and the general transcription factors. The Mediator complex unfolds to an extended conformation and partially surrounds RNA polymerase II, specifically interacting with the unphosphorylated form of the C-terminal domain (CTD) of RNA polymerase II. The Mediator complex dissociates from the RNA polymerase II holoenzyme and stays at the promoter when transcriptional elongation begins. The protein is Mediator of RNA polymerase II transcription subunit 1 (MED1) of Saccharomyces cerevisiae (strain ATCC 204508 / S288c) (Baker's yeast).